The primary structure comprises 118 residues: Holin-like protein CidA 2 (118 aa).

4 consecutive transmembrane segments (helical) span residues 5–27 (MLLL…QGVF), 31–50 (MPGS…TRIL), 62–84 (LLVF…ESFL), and 88–110 (GSII…GYIS).

It belongs to the CidA/LrgA family. CidA subfamily.

Its subcellular location is the cell membrane. Its function is as follows. Increases the activity of extracellular murein hydrolases possibly by mediating their export via hole formation. Inhibited by the antiholin-like proteins LrgAB. In an unstressed cell, the LrgAB products probably inhibit the function of the CidA protein. When a cell is stressed by the addition of antibiotics or by other factors in the environment, CidA possibly oligomerizes within the bacterial cell membrane, creating lesions that disrupt the proton motive force, which in turn results in loss of cell viability. These lesions are also hypothesized to regulate the subsequent cell lysis by either allowing the murein hydrolases access to the cell wall substrate and/or regulating their activity by a possible change in the cell wall pH that results from loss of membrane potential. This is Holin-like protein CidA 2 (cidA2) from Bacillus anthracis.